Reading from the N-terminus, the 437-residue chain is MNYTTQMDAAKKGIVTKEMEIVAKKENMNVKDLMKLVSKGKVAIPANKNHKSLDPEGIGQGLRTKINVNLGISKDCYNIDMELEKVQKAIDMKAEAIMDLSCFGKTEEFRKRLIDMSPAIIGTVPIYDAVGFYDKELKDITSEEFLKVAEKHAENGADFLTIHVGMNRKTAATFKKNPRRMNIVSRGGSLLYAWMELNNKENPFYEGFDKLLDICEKYDVTLSLGDACRPGCIEDSTDASQIEELIALGELTKRAWERNVQVIIEGPGHMTLDEIETNMKIEKKLCHGAPFYVLGPIVTDIAPGYDHITSAIGGAIAATHGADFLCYVTPAEHLRLPNLDDMKEGIIATKIAAHAADLAKGVKGARDWDNAMAKARRDLDWERMFELSIDEEKARRYREESKAKSKDSCTMCGKMCAVRNMNRVTEGKDLNMLRDDD.

Substrate is bound by residues Asn-69, Met-98, Tyr-127, His-163, 185 to 187, 226 to 229, and Glu-265; these read SRG and DACR. Residue His-269 participates in Zn(2+) binding. Tyr-292 serves as a coordination point for substrate. His-333 serves as a coordination point for Zn(2+). [4Fe-4S] cluster contacts are provided by Cys-409, Cys-412, and Cys-416.

This sequence belongs to the ThiC family. [4Fe-4S] cluster is required as a cofactor.

It carries out the reaction 5-amino-1-(5-phospho-beta-D-ribosyl)imidazole + S-adenosyl-L-methionine = 4-amino-2-methyl-5-(phosphooxymethyl)pyrimidine + CO + 5'-deoxyadenosine + formate + L-methionine + 3 H(+). Its pathway is cofactor biosynthesis; thiamine diphosphate biosynthesis. In terms of biological role, catalyzes the synthesis of the hydroxymethylpyrimidine phosphate (HMP-P) moiety of thiamine from aminoimidazole ribotide (AIR) in a radical S-adenosyl-L-methionine (SAM)-dependent reaction. This Clostridium botulinum (strain Okra / Type B1) protein is Phosphomethylpyrimidine synthase.